Consider the following 334-residue polypeptide: L-lactate dehydrogenase B chain (334 aa).

At alanine 2 the chain carries N-acetylalanine. Lysine 7 bears the N6-acetyllysine mark. Serine 44 carries the post-translational modification Phosphoserine. Residues 53 to 58 (DVLEDK) and arginine 100 each bind NAD(+). Position 58 is an N6-acetyllysine (lysine 58). Residue arginine 107 coordinates substrate. N6-acetyllysine is present on lysine 119. Asparagine 139 provides a ligand contact to NAD(+). Substrate is bound by residues asparagine 139 and arginine 170. The Proton acceptor role is filled by histidine 194. Residue tyrosine 240 is modified to Phosphotyrosine. Threonine 249 provides a ligand contact to substrate. At lysine 329 the chain carries N6-acetyllysine.

Belongs to the LDH/MDH superfamily. LDH family. In terms of assembly, homotetramer. Interacts with PTEN upstream reading frame protein MP31; the interaction leads to inhibition of mitochondrial lactate dehydrogenase activity, preventing conversion of lactate to pyruvate in mitochondria.

It is found in the cytoplasm. It localises to the mitochondrion inner membrane. The enzyme catalyses (S)-lactate + NAD(+) = pyruvate + NADH + H(+). It participates in fermentation; pyruvate fermentation to lactate; (S)-lactate from pyruvate: step 1/1. Interconverts simultaneously and stereospecifically pyruvate and lactate with concomitant interconversion of NADH and NAD(+). The protein is L-lactate dehydrogenase B chain (LDHB) of Bos taurus (Bovine).